Reading from the N-terminus, the 121-residue chain is MIQQETFLNVADNSGAKRIQCIRVLGSNRRYAHVGDIIVAAVKDAMPNMSVKKSDVVKAVIVRTKATLRRETGNSIRFDDNAAVIINDDKNPKGTRVFGPVARELRERNFTKIVSLAPEVI.

This sequence belongs to the universal ribosomal protein uL14 family. Part of the 50S ribosomal subunit.

The protein localises to the plastid. It is found in the organellar chromatophore. Its function is as follows. Binds to 23S rRNA. This Paulinella chromatophora protein is Large ribosomal subunit protein uL14c.